A 64-amino-acid polypeptide reads, in one-letter code: Basic secretory protease (64 aa).

Requires a divalent metal cation as cofactor. Post-translationally, glycosylated.

With respect to regulation, inhibited by EDTA. Functionally, metalloprotease, digests gelatin and azocasein (in vitro). This Boswellia serrata (Indian frankincense) protein is Basic secretory protease.